The chain runs to 72 residues: MAGYLNNIALNLEIVLKNKADSPEVSETLVTRICENLLLSKEVSFLKADGSVENFKLSDMEYEITNTEELPE.

Homodimer.

This chain is SPbeta prophage-derived uncharacterized protein YopT (yopT), found in Bacillus subtilis (strain 168).